The sequence spans 2395 residues: MPATPVRASSTRISRRTSSRSVADDQPSTSSAVAPPPSPIAIETDEDAVVEEEKKKKKTSDDLEIITPRTPVDRRIPYICSILLTENRSIRDKLVLSSGPVRQEDHEEQIARAQRIQPVVDQIQRVEQIILNGSVEDILKDPRFAVMADLTKEPPPTPAPPPPIQKTMQPIEVKIEDSEGSNTAQPSVLPSCGGGETNVERAAKREAHVLARIAELRKNGLWSNSRLPKCVEPERNKTHWDYLLEEVKWMAVDFRTETNTKRKIAKVIAHAIAKQHRDKQIEIERAAEREIKEKRKMCAGIAKMVRDFWSSTDKVVDIRAKEVLESRLRKARNKHLMFVIGQVDEMSNIVQEGLVSSSKSPSIASDRDDKDEEFKAPGSDSESDDEQTIANAEKSQKKEDVRQEVDALQNEATVDMDDFLYTLPPEYLKAYGLTQEDLEEMKREKLEEQKARKEACGDNEEKMEIDESPSSDAQKPSTSSSDLTAEQLQDPTAEDGNGDGHGVLENVDYVKLNSQDSDERQQELANIAEEALKFQPKGYTLETTQVKTPVPFLIRGQLREYQMVGLDWMVTLYEKNLNGILADEMGLGKTIQTISLLAHMACSESIWGPHLIVVPTSVILNWEMEFKKWCPALKILTYFGTAKERAEKRKGWMKPNCFHVCITSYKTVTQDIRAFKQRAWQYLILDEAQNIKNWKSQRWQALLNVRARRRLLLTGTPLQNSLMELWSLMHFLMPTIFSSHDDFKDWFSNPLTGMMEGNMEFNAPLIGRLHKVLRPFILRRLKKEVEKQLPEKTEHIVNCSLSKRQRYLYDDFMSRRSTKENLKSGNMMSVLNIVMQLRKCCNHPNLFEPRPVVAPFVVEKLQLDVPARLFEISQQDPSSSSASQIPEIFNLSKIGYQSSVRSAKPLIEELEAMSTYPEPRAPEVGGFRFNRTAFVAKNPHTEESEDEGVMRSRVLPKPINGTAQPLQNGNSIPQNAPNRPQTSCIRSKTVVNTVPLTISTDRSGFHFNMANVGRGVVRLDDSARMSPPLKRQKLTGTATNWSDYVPRHVVEKMEESRKNQLEIVRRRFEMIRAPIIPLEMVALVREEIIAEFPRLAVEEDEVVQERLLEYCELLVQRFGMYVEPVLTDAWQCRPSSSGLPSYIRNNLSNIELNSRSLLLNTSTNFDTRMSISRALQFPELRLIEYDCGKLQTLAVLLRQLYLYKHRCLIFTQMSKMLDVLQTFLSHHGYQYFRLDGTTGVEQRQAMMERFNADPKVFCFILSTRSGGVGVNLTGADTVIFYDSDWNPTMDAQAQDRCHRIGQTRNVSIYRLISERTIEENILRKATQKRRLGELAIDEAGFTPEFFKQSDSIRDLFDGENVEVTAVADVATTMSEKEMEVAMAKCEDEADVNAAKIAVAEANVDNAEFDEKSLPPMSNLQGDEEADEKYMELIQQLKPIERYAINFLETQYKPEFEEECKEAEALIDQKREEWDKNLNDTAVIDLDDSDSLLLNDPSTSADFYQSSSLLDEIKFYDELDDIMPIWLPPSPPDSDADFDLRMEDDCLDLMYEIEQMNEARLPQVCHEMRRPLAEKQQKQNTLNAFNDILSAKEKESVYDAVNKCLQMPQSEAITAESAASPAYTEHSSFSMDDTSQDAKIEPSLTENQQPTTTATTTTTVPQQQQQQQQQKSSKKKRNDNRTAQNRTAENGVKRATTPPPSWREEPDYDGAEWNIVEDYALLQAVQVEFANAHLVEKSANEGMVLNWEFVSNAVNKQTRFFRSARQCSIRYQMFVRPKELGQLVASDPISKKTMKVDLSHTELSHLRKGRMTTESQYAHDYGILTDKKHVNRFKSVRVAATRRPVQFWRGPKALESRNLQSLNGGMPPRHESRLAEFDVKTNIRLDAEDIVTMSDESIVAYEASKKKLLASRQTKPSPRQDVRFHTLVLRPYTVPVTTEYSAAPSRREMRIAVPPLQPSALSTISSVAAAATSGPLPSIQHLQSSSTGLGSQQNLQNSHNSEQRNNVQNMHQNQYNSSQNPPIPIRQIGAASSHQHDQGSQGPGGKPQAYHLVQQGSQQQQQQQQQATLQRRNAAAAAGSNVQFIQQQQQQQQSGKNCGQGQSFVVMGSQSSSNDGQGGASTVGGGGGGSQQPHQQQQQQPQQRIQYIPQVTGSGNNGGGGGRGGYGSTLVMPRGGRVVRPAGTLPGGGRLYVDHNRHPYPMSSNVVPVRVLPATQQGQQRMMTGQRRPAPAPGTVAAMVLPNRGAGGIPQMRSLQRGSYTGGGGQQRINVMVQPQQMRSNNGGGVGGQGGLQGGPGGPQGIRRPLVGRPLQRGVDNQAPTVAQVVVAPPQGMQQASQGPPVLHMQRAVSMQMPTSHHHQGQQQAPPQSSQQASQQAPTSDSGTSAPPRQAPPPQN.

A compositionally biased stretch (low complexity) spans 1–12; the sequence is MPATPVRASSTR. Residues 1–62 are disordered; that stretch reads MPATPVRASS…EKKKKKTSDD (62 aa). In terms of domain architecture, HSA spans 227 to 300; it reads LPKCVEPERN…IKEKRKMCAG (74 aa). Residues 354 to 363 show a composition bias toward polar residues; sequence LVSSSKSPSI. Disordered regions lie at residues 354–404 and 444–504; these read LVSS…VRQE and EKLE…HGVL. Composition is skewed to basic and acidic residues over residues 365–375, 394–404, and 444–462; these read SDRDDKDEEFK, KSQKKEDVRQE, and EKLE…NEEK. The stretch at 388-464 forms a coiled coil; it reads TIANAEKSQK…ACGDNEEKME (77 aa). The segment covering 470-490 has biased composition (polar residues); it reads SSDAQKPSTSSSDLTAEQLQD. The region spanning 570–735 is the Helicase ATP-binding domain; sequence VTLYEKNLNG…WSLMHFLMPT (166 aa). ATP is bound at residue 583 to 590; sequence DEMGLGKT. The interval 963 to 982 is disordered; sequence AQPLQNGNSIPQNAPNRPQT. The Helicase C-terminal domain occupies 1196–1342; sequence LLRQLYLYKH…ELAIDEAGFT (147 aa). A coiled-coil region spans residues 1452–1476; the sequence is KPEFEEECKEAEALIDQKREEWDKN. Disordered stretches follow at residues 1615-1706, 1977-2073, 2092-2143, 2276-2306, and 2350-2395; these read ESAA…EEPD, SIQH…RRNA, QSGK…PQQR, QMRS…RPLV, and MQMP…PPQN. 2 stretches are compositionally biased toward low complexity: residues 1647–1669 and 1981–1995; these read QQPT…QQQQ and LQSS…QNLQ. Polar residues predominate over residues 1996–2019; sequence NSHNSEQRNNVQNMHQNQYNSSQN. Low complexity-rich tracts occupy residues 2051-2073 and 2092-2114; these read LVQQ…RRNA and QSGK…SSND. A compositionally biased stretch (gly residues) spans 2115–2129; sequence GQGGASTVGGGGGGS. The segment covering 2130–2142 has biased composition (low complexity); that stretch reads QQPHQQQQQQPQQ. The segment covering 2281-2299 has biased composition (gly residues); the sequence is NGGGVGGQGGLQGGPGGPQ. The span at 2361–2377 shows a compositional bias: low complexity; the sequence is QQQAPPQSSQQASQQAP.

Belongs to the SNF2/RAD54 helicase family. SWR1 subfamily.

It is found in the nucleus. In terms of biological role, probable catalytic component of a chromatin-remodeling complex which mediates the ATP-dependent exchange of histone H2A variant H2AV/htz-1 for H2A, leading to transcriptional regulation of selected genes by chromatin remodeling. Involved in foregut development, and may be involved in vulval development. This Caenorhabditis elegans protein is Helicase ssl-1 (ssl-1).